The following is a 393-amino-acid chain: S-adenosylmethionine synthase (393 aa).

Glutamate 9 contacts Mg(2+). Residue histidine 15 participates in ATP binding. Aspartate 17 lines the Mg(2+) pocket. Glutamate 43 contributes to the K(+) binding site. L-methionine contacts are provided by glutamate 56 and glutamine 99. Residues aspartate 167 to lysine 169, serine 235 to phenylalanine 238, aspartate 246, arginine 252 to lysine 253, alanine 269, lysine 273, and lysine 277 each bind ATP. Aspartate 246 provides a ligand contact to L-methionine. Lysine 277 lines the L-methionine pocket.

This sequence belongs to the AdoMet synthase family. Homotetramer; dimer of dimers. It depends on Mn(2+) as a cofactor. Requires Mg(2+) as cofactor. Co(2+) serves as cofactor. K(+) is required as a cofactor.

It localises to the cytoplasm. The catalysed reaction is L-methionine + ATP + H2O = S-adenosyl-L-methionine + phosphate + diphosphate. Its pathway is amino-acid biosynthesis; S-adenosyl-L-methionine biosynthesis; S-adenosyl-L-methionine from L-methionine: step 1/1. Increased activity in the presence of 25 percent acetonitrile, methanol or dimethylformamide. Catalyzes the formation of S-adenosylmethionine from methionine and ATP. This Acacia koa (Koa tree) protein is S-adenosylmethionine synthase.